Consider the following 436-residue polypeptide: 3-ketoacyl-CoA thiolase (436 aa).

C99 functions as the Acyl-thioester intermediate in the catalytic mechanism. Residues H392 and C422 each act as proton acceptor in the active site.

This sequence belongs to the thiolase-like superfamily. Thiolase family. In terms of assembly, heterotetramer of two alpha chains (FadJ) and two beta chains (FadI).

The protein localises to the cytoplasm. The enzyme catalyses an acyl-CoA + acetyl-CoA = a 3-oxoacyl-CoA + CoA. The protein operates within lipid metabolism; fatty acid beta-oxidation. In terms of biological role, catalyzes the final step of fatty acid oxidation in which acetyl-CoA is released and the CoA ester of a fatty acid two carbons shorter is formed. In Shigella boydii serotype 18 (strain CDC 3083-94 / BS512), this protein is 3-ketoacyl-CoA thiolase.